A 626-amino-acid polypeptide reads, in one-letter code: Bifurcating [FeFe] hydrogenase beta subunit (626 aa).

NAD(+) is bound at residue 198-201 (GGGG). FMN is bound by residues Lys207 and 224-228 (NGDEG). Asp229 is a binding site for NAD(+). FMN-binding positions include 312–317 (FVCGEE) and 350–352 (INN). [4Fe-4S] cluster-binding residues include Cys485, Cys488, Cys491, Cys531, Cys578, Cys581, Cys584, Cys588, Cys608, Cys611, Cys614, and Cys618. 4Fe-4S ferredoxin-type domains follow at residues 569–598 (KKYV…GERG) and 599–626 (KPYT…IELV).

Belongs to the complex I 51 kDa subunit family. In terms of assembly, heterotrimer composed of HydA (alpha subunit), HydB (beta subunit) and HydC (gamma subunit). Near neutral and acidic pH conditions favor oligomerization of the heterotrimeric holoenzyme. It depends on [2Fe-2S] cluster as a cofactor. The cofactor is [4Fe-4S] cluster. Requires FMN as cofactor.

It localises to the cytoplasm. The catalysed reaction is 2 H2 + 2 oxidized [2Fe-2S]-[ferredoxin] + NAD(+) = 2 reduced [2Fe-2S]-[ferredoxin] + NADH + 3 H(+). Its function is as follows. Catalyzes the oxidation of the physiological electron carriers NADH and reduced ferredoxin, coupled to the production of H(2). Acts as a bifurcating [FeFe] hydrogenase, which uses the exergonic oxidation of reduced ferredoxin to drive the unfavorable oxidation of NADH to produce H(2). The beta subunit contains flavin- and NAD-binding sites and is potentially the site for NADH oxidation, with the subsequent shuttling of electrons to the alpha subunit. In Thermotoga maritima (strain ATCC 43589 / DSM 3109 / JCM 10099 / NBRC 100826 / MSB8), this protein is Bifurcating [FeFe] hydrogenase beta subunit.